The following is a 236-amino-acid chain: 2-C-methyl-D-erythritol 4-phosphate cytidylyltransferase (236 aa).

This sequence belongs to the IspD/TarI cytidylyltransferase family. IspD subfamily. As to quaternary structure, homodimer.

It catalyses the reaction 2-C-methyl-D-erythritol 4-phosphate + CTP + H(+) = 4-CDP-2-C-methyl-D-erythritol + diphosphate. It functions in the pathway isoprenoid biosynthesis; isopentenyl diphosphate biosynthesis via DXP pathway; isopentenyl diphosphate from 1-deoxy-D-xylulose 5-phosphate: step 2/6. Its function is as follows. Catalyzes the formation of 4-diphosphocytidyl-2-C-methyl-D-erythritol from CTP and 2-C-methyl-D-erythritol 4-phosphate (MEP). The polypeptide is 2-C-methyl-D-erythritol 4-phosphate cytidylyltransferase (Escherichia coli O17:K52:H18 (strain UMN026 / ExPEC)).